An 86-amino-acid polypeptide reads, in one-letter code: Neurotoxin-like protein pMD18-NTL3 (86 aa).

The signal sequence occupies residues 1 to 21 (MKTLLLTLVVLTIACLDLGYT). 4 disulfides stabilise this stretch: C24–C45, C38–C62, C66–C78, and C79–C84.

The protein belongs to the three-finger toxin family. Short-chain subfamily. Orphan group IX sub-subfamily. As to expression, expressed by the venom gland.

The protein localises to the secreted. The protein is Neurotoxin-like protein pMD18-NTL3 of Bungarus multicinctus (Many-banded krait).